Reading from the N-terminus, the 37-residue chain is Large ribosomal subunit protein bL36 (37 aa).

It belongs to the bacterial ribosomal protein bL36 family.

The polypeptide is Large ribosomal subunit protein bL36 (Nitratiruptor sp. (strain SB155-2)).